Here is a 333-residue protein sequence, read N- to C-terminus: Tetraacyldisaccharide 4'-kinase (333 aa).

An ATP-binding site is contributed by 60 to 67; that stretch reads TVGGTGKT.

Belongs to the LpxK family.

The enzyme catalyses a lipid A disaccharide + ATP = a lipid IVA + ADP + H(+). It participates in glycolipid biosynthesis; lipid IV(A) biosynthesis; lipid IV(A) from (3R)-3-hydroxytetradecanoyl-[acyl-carrier-protein] and UDP-N-acetyl-alpha-D-glucosamine: step 6/6. Its function is as follows. Transfers the gamma-phosphate of ATP to the 4'-position of a tetraacyldisaccharide 1-phosphate intermediate (termed DS-1-P) to form tetraacyldisaccharide 1,4'-bis-phosphate (lipid IVA). This chain is Tetraacyldisaccharide 4'-kinase, found in Pseudomonas putida (strain ATCC 700007 / DSM 6899 / JCM 31910 / BCRC 17059 / LMG 24140 / F1).